A 372-amino-acid chain; its full sequence is Phospho-N-acetylmuramoyl-pentapeptide-transferase (372 aa).

Helical transmembrane passes span 21–41, 71–91, 98–118, 134–154, 176–196, 211–231, 251–271, 275–295, 300–320, and 349–369; these read SLTLRALLAVITALAFSMIFG, TPTMGGVLILSAIGVSTLLWA, VWILLIVMIIFGAVGWADDWL, YFWLSMGALFVGISLYYIATL, MIPFSAVPFGIGFIIFTYFVI, GLAILPVVLVAAGLGAMAYVS, VIIVCGAMIGAGLGFLWFNAH, VFMGDVGALSLGAMLGTIAVM, IAFAIMGGLFVAEALSVMLQV, and QVVARFWIIAIILVILGLMTL.

The protein belongs to the glycosyltransferase 4 family. MraY subfamily. It depends on Mg(2+) as a cofactor.

It localises to the cell inner membrane. It carries out the reaction UDP-N-acetyl-alpha-D-muramoyl-L-alanyl-gamma-D-glutamyl-meso-2,6-diaminopimeloyl-D-alanyl-D-alanine + di-trans,octa-cis-undecaprenyl phosphate = di-trans,octa-cis-undecaprenyl diphospho-N-acetyl-alpha-D-muramoyl-L-alanyl-D-glutamyl-meso-2,6-diaminopimeloyl-D-alanyl-D-alanine + UMP. It functions in the pathway cell wall biogenesis; peptidoglycan biosynthesis. Functionally, catalyzes the initial step of the lipid cycle reactions in the biosynthesis of the cell wall peptidoglycan: transfers peptidoglycan precursor phospho-MurNAc-pentapeptide from UDP-MurNAc-pentapeptide onto the lipid carrier undecaprenyl phosphate, yielding undecaprenyl-pyrophosphoryl-MurNAc-pentapeptide, known as lipid I. The chain is Phospho-N-acetylmuramoyl-pentapeptide-transferase from Psychrobacter arcticus (strain DSM 17307 / VKM B-2377 / 273-4).